The following is a 43-amino-acid chain: Potassium channel toxin gamma-KTx 3.3 (43 aa).

Disulfide bonds link Cys5–Cys23, Cys11–Cys34, Cys20–Cys39, and Cys24–Cys41.

Belongs to the ergtoxin family. Gamma-KTx 3 subfamily. In terms of tissue distribution, expressed by the venom gland.

It is found in the secreted. Its function is as follows. Blocks Kv11/ERG potassium channels. This is Potassium channel toxin gamma-KTx 3.3 from Centruroides sculpturatus (Arizona bark scorpion).